We begin with the raw amino-acid sequence, 1026 residues long: Multidrug resistance protein MdtC (1026 aa).

Topologically, residues 1 to 6 (MRFFAL) are cytoplasmic. Residues 7 to 29 (FIYRPVATILIAAAITLCGILGF) form a helical membrane-spanning segment. The Periplasmic portion of the chain corresponds to 30 to 335 (RLLPVAPLPQ…TIRASLQEVE (306 aa)). The chain crosses the membrane as a helical span at residues 336–353 (ETLAISVALVILVVFLFL). At 354–359 (RSGRAT) the chain is on the cytoplasmic side. Residues 360–379 (LIPAVAVPVSLIGTFAAMYL) form a helical membrane-spanning segment. The Periplasmic portion of the chain corresponds to 380–388 (CGFSLNNLS). Residues 389 to 411 (LMALTIATGFVVDDAIVVLENIA) form a helical membrane-spanning segment. Topologically, residues 412 to 430 (RHLEAGMKPLQAALQGTRE) are cytoplasmic. A helical membrane pass occupies residues 431 to 453 (VGFTVISMSLSLVAVFLPLLLMG). The Periplasmic segment spans residues 454 to 467 (GLPGRLLREFAVTL). The helical transmembrane segment at 468-490 (SVAIGISLVVSLTLTPMMCGWML) threads the bilayer. Residues 491–852 (KSSKPRTQPR…QVFQQTMNSQ (362 aa)) are Cytoplasmic-facing. Residues 853–875 (LILIVAAIATVYIVLGILYESYV) traverse the membrane as a helical segment. At 876-894 (HPLTILSTLPSAGVGALLA) the chain is on the periplasmic side. A helical membrane pass occupies residues 895-917 (LELFNAPFSLIALIGIMLLIGIV). The Cytoplasmic portion of the chain corresponds to 918–947 (KKNAIMMVDFALEAQRSGGLTPEQAIFQAC). A helical transmembrane segment spans residues 948-970 (LLRFRPIMMTTLAALFGALPLVL). Topologically, residues 971 to 984 (SGGDGSELRQPLGI) are periplasmic. A helical membrane pass occupies residues 985–1007 (TIVGGLVMSQLLTLYTTPVVYLF). At 1008–1026 (FDRLRLRFSRKNSKPVVEI) the chain is on the cytoplasmic side.

It belongs to the resistance-nodulation-cell division (RND) (TC 2.A.6) family. MdtC subfamily. As to quaternary structure, part of a tripartite efflux system composed of MdtA, MdtB and MdtC. MdtC forms a heteromultimer with MdtB.

Its subcellular location is the cell inner membrane. This chain is Multidrug resistance protein MdtC, found in Salmonella typhimurium (strain LT2 / SGSC1412 / ATCC 700720).